A 541-amino-acid polypeptide reads, in one-letter code: Arginine--tRNA ligase (541 aa).

The 'HIGH' region motif lies at Ala119 to His129.

Belongs to the class-I aminoacyl-tRNA synthetase family. In terms of assembly, monomer.

Its subcellular location is the cytoplasm. The enzyme catalyses tRNA(Arg) + L-arginine + ATP = L-arginyl-tRNA(Arg) + AMP + diphosphate. This chain is Arginine--tRNA ligase, found in Helicobacter pylori (strain Shi470).